The following is a 521-amino-acid chain: MLSFRNQPGNPSGNLTFGGVSNRAREPRALEIRLDQDFAEGERGVHFVATPDPNVDRRGTLCSADVQYILKNVLSHYNSSNDTISVSKRAKSLRIIQELKLRYGLTDEMLQKLSSLLLSSPLMSDTMDGRRKVTDIISTCASLNSKSTLSDIRGKFFNDYVRYGGNLTHVNVNTRSSASVQDDIPIVLTVMNLPGKTSQAYVVGDDTVNLKLICRKSTSVYNMNPDDEEMRTFENKTETRVISTQLSEGSAEYKYFLTFIQEARLAAHNENLTMYELTKSFNINAPLDANGLKEVKKETRDQVMYLEFGSSIEANLIFQTRAVKPNARSHHKRIAAAFQPMCAFIAWMIESDEVSRGSPDQQKLYYGAFGGDAPLGFQRELRNLMRSLYWTEGIKYDAENDLYPKCWTMADHGPPDSNNYNFEIEHRKIILAMYVLEHLREHGRMPHRFAQKFSTGVSRTPPVIGAVARALRKVCVDDTLWCEHVLRTTRKNDPQRTKVTILDAAAQIFLQNVSRNAPKPR.

Over residues 1–15 the composition is skewed to polar residues; it reads MLSFRNQPGNPSGNL. A disordered region spans residues 1–20; it reads MLSFRNQPGNPSGNLTFGGV.

This is an uncharacterized protein from Micromonas pusilla (Picoplanktonic green alga).